The primary structure comprises 699 residues: Elongation factor G 2 (699 aa).

The region spanning 8-290 is the tr-type G domain; that stretch reads ERYRNIGICA…AVIEYLPSPT (283 aa). Residues 17–24, 88–92, and 142–145 contribute to the GTP site; these read AHVDAGKT, DTPGH, and NKMD.

It belongs to the TRAFAC class translation factor GTPase superfamily. Classic translation factor GTPase family. EF-G/EF-2 subfamily.

The protein resides in the cytoplasm. Catalyzes the GTP-dependent ribosomal translocation step during translation elongation. During this step, the ribosome changes from the pre-translocational (PRE) to the post-translocational (POST) state as the newly formed A-site-bound peptidyl-tRNA and P-site-bound deacylated tRNA move to the P and E sites, respectively. Catalyzes the coordinated movement of the two tRNA molecules, the mRNA and conformational changes in the ribosome. This Colwellia psychrerythraea (strain 34H / ATCC BAA-681) (Vibrio psychroerythus) protein is Elongation factor G 2.